Consider the following 862-residue polypeptide: Active breakpoint cluster region-related protein (862 aa).

The disordered stretch occupies residues 29–84 (YDAEGNEEHKNSREGSETMPYIDESPTMSPQLSARSQDSVDGVSPTPTEVLLPGGE). A compositionally biased stretch (basic and acidic residues) spans 34–44 (NEEHKNSREGS). The segment covering 54-67 (PTMSPQLSARSQDS) has biased composition (polar residues). A DH domain is found at 93–286 (MRKLVLSGVL…QNFLSSINED (194 aa)). The 160-residue stretch at 303–462 (QLVKDGFLVE…WREAIQKLQK (160 aa)) folds into the PH domain. The C2 domain occupies 488–616 (VHNVPIISHK…QSKNWHDDVI (129 aa)). In terms of domain architecture, Rho-GAP spans 650-848 (VKISVVTKRE…YYLQHPPISF (199 aa)).

The protein localises to the cell projection. The protein resides in the dendritic spine. It localises to the axon. It is found in the synapse. Its function is as follows. Protein with a unique structure having two opposing regulatory activities toward small GTP-binding proteins. The C-terminus is a GTPase-activating protein domain which stimulates GTP hydrolysis by RAC1, RAC2 and CDC42. Accelerates the intrinsic rate of GTP hydrolysis of RAC1 or CDC42, leading to down-regulation of the active GTP-bound form. The central Dbl homology (DH) domain functions as guanine nucleotide exchange factor (GEF) that modulates the GTPases CDC42, RHOA and RAC1. Promotes the conversion of CDC42, RHOA and RAC1 from the GDP-bound to the GTP-bound form. This Xenopus laevis (African clawed frog) protein is Active breakpoint cluster region-related protein (abr).